Reading from the N-terminus, the 275-residue chain is Secreted RxLR effector protein 153 (275 aa).

A signal peptide spans 1–27; that stretch reads MRNRAFLFGLFFIEYACLVLFAAPTRA. An N-linked (GlcNAc...) asparagine glycan is attached at Asn-45. The RxLR-dEER motif lies at 48–63; that stretch reads RTLQADDSKRISAEER.

The protein belongs to the RxLR effector family.

It localises to the secreted. The protein resides in the host cell membrane. Functionally, secreted effector that completely suppresses the host cell death induced by cell death-inducing proteins. This Plasmopara viticola (Downy mildew of grapevine) protein is Secreted RxLR effector protein 153.